Reading from the N-terminus, the 146-residue chain is P antigen family member 1 (146 aa).

A disordered region spans residues 16–146 (YVESSEESSD…PEEDEGQSQP (131 aa)). Residues 19-32 (SSEESSDEQPDEVE) show a composition bias toward acidic residues. Phosphoserine is present on Ser63. Residues 79–92 (PDTKRVCLRNEEQM) are compositionally biased toward basic and acidic residues. A Phosphoserine modification is found at Ser105. A compositionally biased stretch (basic and acidic residues) spans 107–120 (EQVHPKTGCERGDG). A Phosphoserine modification is found at Ser144.

This sequence belongs to the GAGE family. As to expression, isolated from prostate cancer cell lines; expression associated with progression to androgen insensitive phenotype. Expressed in normal testis and at lower level in normal placenta.

This Homo sapiens (Human) protein is P antigen family member 1 (PAGE1).